The primary structure comprises 331 residues: 6-phosphogluconolactonase (331 aa).

The protein belongs to the cycloisomerase 2 family.

The catalysed reaction is 6-phospho-D-glucono-1,5-lactone + H2O = 6-phospho-D-gluconate + H(+). The protein operates within carbohydrate degradation; pentose phosphate pathway; D-ribulose 5-phosphate from D-glucose 6-phosphate (oxidative stage): step 2/3. In terms of biological role, catalyzes the hydrolysis of 6-phosphogluconolactone to 6-phosphogluconate. This Serratia proteamaculans (strain 568) protein is 6-phosphogluconolactonase.